We begin with the raw amino-acid sequence, 757 residues long: Polyribonucleotide nucleotidyltransferase (757 aa).

Mg(2+) is bound by residues aspartate 531 and aspartate 537. The KH domain occupies 597–656 (PRVTTIRVPVDKIGEVIGPKGKIINAITEETGAQISIEDDGTVFVGATDGPSAQAAIDRI). One can recognise an S1 motif domain in the interval 668 to 737 (GERFLGTVVK…KRGKISLVLV (70 aa)).

This sequence belongs to the polyribonucleotide nucleotidyltransferase family. It depends on Mg(2+) as a cofactor.

Its subcellular location is the cytoplasm. The enzyme catalyses RNA(n+1) + phosphate = RNA(n) + a ribonucleoside 5'-diphosphate. Functionally, involved in mRNA degradation. Catalyzes the phosphorolysis of single-stranded polyribonucleotides processively in the 3'- to 5'-direction. The sequence is that of Polyribonucleotide nucleotidyltransferase from Mycolicibacterium paratuberculosis (strain ATCC BAA-968 / K-10) (Mycobacterium paratuberculosis).